The primary structure comprises 275 residues: 2,3,4,5-tetrahydropyridine-2,6-dicarboxylate N-succinyltransferase (275 aa).

2 residues coordinate substrate: Arg108 and Asp145.

It belongs to the transferase hexapeptide repeat family. Homotrimer.

The protein localises to the cytoplasm. The catalysed reaction is (S)-2,3,4,5-tetrahydrodipicolinate + succinyl-CoA + H2O = (S)-2-succinylamino-6-oxoheptanedioate + CoA. Its pathway is amino-acid biosynthesis; L-lysine biosynthesis via DAP pathway; LL-2,6-diaminopimelate from (S)-tetrahydrodipicolinate (succinylase route): step 1/3. The sequence is that of 2,3,4,5-tetrahydropyridine-2,6-dicarboxylate N-succinyltransferase from Jannaschia sp. (strain CCS1).